The chain runs to 482 residues: Membrane-bound lytic murein transglycosylase F (482 aa).

The N-terminal stretch at 1–13 is a signal peptide; the sequence is MKGLFLRIITALA. The segment at 14–267 is non-LT domain; the sequence is LLFWAIDMVF…NLKEKYLGHI (254 aa). The tract at residues 268–482 is LT domain; that stretch reads SQFDYVDTRS…NLEEIKENKD (215 aa). Residue Glu-312 is part of the active site.

In the N-terminal section; belongs to the bacterial solute-binding protein 3 family. It in the C-terminal section; belongs to the transglycosylase Slt family.

The protein resides in the cell outer membrane. It carries out the reaction Exolytic cleavage of the (1-&gt;4)-beta-glycosidic linkage between N-acetylmuramic acid (MurNAc) and N-acetylglucosamine (GlcNAc) residues in peptidoglycan, from either the reducing or the non-reducing ends of the peptidoglycan chains, with concomitant formation of a 1,6-anhydrobond in the MurNAc residue.. Functionally, murein-degrading enzyme that degrades murein glycan strands and insoluble, high-molecular weight murein sacculi, with the concomitant formation of a 1,6-anhydromuramoyl product. Lytic transglycosylases (LTs) play an integral role in the metabolism of the peptidoglycan (PG) sacculus. Their lytic action creates space within the PG sacculus to allow for its expansion as well as for the insertion of various structures such as secretion systems and flagella. The sequence is that of Membrane-bound lytic murein transglycosylase F from Haemophilus influenzae (strain PittEE).